Here is a 76-residue protein sequence, read N- to C-terminus: Acyl carrier protein (76 aa).

Positions 1-76 constitute a Carrier domain; sequence MATFDEVKEV…AAVDYIGSKQ (76 aa). Ser36 is modified (O-(pantetheine 4'-phosphoryl)serine).

Belongs to the acyl carrier protein (ACP) family. 4'-phosphopantetheine is transferred from CoA to a specific serine of apo-ACP by AcpS. This modification is essential for activity because fatty acids are bound in thioester linkage to the sulfhydryl of the prosthetic group.

It is found in the cytoplasm. It participates in lipid metabolism; fatty acid biosynthesis. In terms of biological role, carrier of the growing fatty acid chain in fatty acid biosynthesis. The sequence is that of Acyl carrier protein from Deinococcus geothermalis (strain DSM 11300 / CIP 105573 / AG-3a).